The sequence spans 298 residues: Formamidopyrimidine-DNA glycosylase (298 aa).

The active-site Schiff-base intermediate with DNA is the Pro2. Glu3 functions as the Proton donor in the catalytic mechanism. Lys58 acts as the Proton donor; for beta-elimination activity in catalysis. His106, Arg128, and Lys171 together coordinate DNA. Residues 262–298 (SVYDQEGQPCRTPGCGGTVERVVQAGRSTFYCAACQK) form an FPG-type zinc finger. Catalysis depends on Arg288, which acts as the Proton donor; for delta-elimination activity.

It belongs to the FPG family. As to quaternary structure, monomer. Zn(2+) serves as cofactor.

The catalysed reaction is Hydrolysis of DNA containing ring-opened 7-methylguanine residues, releasing 2,6-diamino-4-hydroxy-5-(N-methyl)formamidopyrimidine.. It carries out the reaction 2'-deoxyribonucleotide-(2'-deoxyribose 5'-phosphate)-2'-deoxyribonucleotide-DNA = a 3'-end 2'-deoxyribonucleotide-(2,3-dehydro-2,3-deoxyribose 5'-phosphate)-DNA + a 5'-end 5'-phospho-2'-deoxyribonucleoside-DNA + H(+). Involved in base excision repair of DNA damaged by oxidation or by mutagenic agents. Acts as a DNA glycosylase that recognizes and removes damaged bases. Has a preference for oxidized purines, such as 7,8-dihydro-8-oxoguanine (8-oxoG). Has AP (apurinic/apyrimidinic) lyase activity and introduces nicks in the DNA strand. Cleaves the DNA backbone by beta-delta elimination to generate a single-strand break at the site of the removed base with both 3'- and 5'-phosphates. This is Formamidopyrimidine-DNA glycosylase (mutM) from Agrobacterium fabrum (strain C58 / ATCC 33970) (Agrobacterium tumefaciens (strain C58)).